The primary structure comprises 236 residues: UPF0257 lipoprotein YnfC (236 aa).

The first 16 residues, 1 to 16, serve as a signal peptide directing secretion; the sequence is MKKPLLLTLLCMILAG. Residue cysteine 17 is the site of N-palmitoyl cysteine attachment. Cysteine 17 is lipidated: S-diacylglycerol cysteine.

This sequence belongs to the UPF0257 family.

It localises to the cell membrane. This chain is UPF0257 lipoprotein YnfC, found in Salmonella paratyphi C (strain RKS4594).